We begin with the raw amino-acid sequence, 289 residues long: Type III pantothenate kinase (289 aa).

Residue 9-16 (DAGNSRVK) coordinates ATP. Residues Tyr106 and 113-116 (GSDR) contribute to the substrate site. Catalysis depends on Asp115, which acts as the Proton acceptor. Thr139 serves as a coordination point for ATP. Thr209 contacts substrate.

Belongs to the type III pantothenate kinase family. In terms of assembly, homodimer. NH4(+) serves as cofactor. K(+) is required as a cofactor.

It is found in the cytoplasm. The enzyme catalyses (R)-pantothenate + ATP = (R)-4'-phosphopantothenate + ADP + H(+). It functions in the pathway cofactor biosynthesis; coenzyme A biosynthesis; CoA from (R)-pantothenate: step 1/5. In terms of biological role, catalyzes the phosphorylation of pantothenate (Pan), the first step in CoA biosynthesis. The sequence is that of Type III pantothenate kinase from Paraburkholderia phymatum (strain DSM 17167 / CIP 108236 / LMG 21445 / STM815) (Burkholderia phymatum).